Consider the following 330-residue polypeptide: Olfactory receptor 11H6 (330 aa).

The Extracellular portion of the chain corresponds to 1–43 (MFFIIHSLVTSVFLTALGPQNRTMHFVTEFVLLGFHGQREMQS). An N-linked (GlcNAc...) asparagine glycan is attached at N21. Residues 44–64 (CFFSFILVLYLLTLLGNGAIV) form a helical membrane-spanning segment. Topologically, residues 65-72 (CAVKLDRR) are cytoplasmic. A helical membrane pass occupies residues 73 to 93 (LHTPMYILLGNFAFLEIWYIS). At 94 to 117 (STVPNMLVNILSEIKTISFSGCFL) the chain is on the extracellular side. A disulfide bond links C115 and C207. A helical transmembrane segment spans residues 118–138 (QFYFFFSLGTTECFFLSVMAY). Over 139 to 157 (DRYLAICRPLHYPSIMTGK) the chain is Cytoplasmic. Residues 158–178 (FCIILVCVCWVGGFLCYPVPI) traverse the membrane as a helical segment. Topologically, residues 179–215 (VLISQLPFCGPNIIDHLVCDPGPLFALACISAPSTEL) are extracellular. The chain crosses the membrane as a helical span at residues 216–235 (ICYTFNSMIIFGPFLSILGS). Over 236-255 (YTLVIRAVLCIPSGAGRTKA) the chain is Cytoplasmic. Residues 256 to 276 (FSTCGSHLMVVSLFYGTLMVM) traverse the membrane as a helical segment. Residues 277–289 (YVSPTSGNPAGMQ) lie on the Extracellular side of the membrane. A helical transmembrane segment spans residues 290-310 (KIITLVYTAMTPFLNPLIYSL). The Cytoplasmic segment spans residues 311–330 (RNKDMKDALKRVLGLTVSQN).

Belongs to the G-protein coupled receptor 1 family.

The protein resides in the cell membrane. In terms of biological role, odorant receptor. The sequence is that of Olfactory receptor 11H6 (OR11H6) from Homo sapiens (Human).